Here is a 541-residue protein sequence, read N- to C-terminus: Propionyl-CoA carboxylase beta chain, mitochondrial (541 aa).

The transit peptide at 1 to 28 directs the protein to the mitochondrion; that stretch reads MAAAIRIRAVAAGARLSVLNCGLGITTR. Positions 34–292 constitute a CoA carboxyltransferase N-terminal domain; it reads PVSVKERIDN…SSQDPAPIRE (259 aa). Positions 34–535 are carboxyltransferase; that stretch reads PVSVKERIDN…SKKVHRPWRK (502 aa). Phosphoserine is present on Ser73. Lys101 is subject to N6-acetyllysine; alternate. The residue at position 101 (Lys101) is an N6-succinyllysine; alternate. An N6-succinyllysine modification is found at Lys250. Residues 296–535 form the CoA carboxyltransferase C-terminal domain; sequence PSDRLVPELD…SKKVHRPWRK (240 aa). The segment at 327–360 is acyl-CoA binding; it reads DEREFFEIMPSYAKNIVVGFARMNGRTVGIVGNQ. N6-acetyllysine; alternate occurs at positions 476 and 491. Lys476 and Lys491 each carry N6-succinyllysine; alternate.

It belongs to the AccD/PCCB family. The holoenzyme is a dodecamer composed of 6 PCCA/alpha subunits and 6 PCCB/beta subunits. In terms of tissue distribution, broadly expressed. Most abundantly expressed in the kidney, liver, small intestine and stomach.

The protein resides in the mitochondrion matrix. The catalysed reaction is propanoyl-CoA + hydrogencarbonate + ATP = (S)-methylmalonyl-CoA + ADP + phosphate + H(+). The enzyme catalyses butanoyl-CoA + hydrogencarbonate + ATP = (2S)-ethylmalonyl-CoA + ADP + phosphate + H(+). It participates in metabolic intermediate metabolism; propanoyl-CoA degradation; succinyl-CoA from propanoyl-CoA: step 1/3. This is one of the 2 subunits of the biotin-dependent propionyl-CoA carboxylase (PCC), a mitochondrial enzyme involved in the catabolism of odd chain fatty acids, branched-chain amino acids isoleucine, threonine, methionine, and valine and other metabolites. Propionyl-CoA carboxylase catalyzes the carboxylation of propionyl-CoA/propanoyl-CoA to D-methylmalonyl-CoA/(S)-methylmalonyl-CoA. Within the holoenzyme, the alpha subunit catalyzes the ATP-dependent carboxylation of the biotin carried by the biotin carboxyl carrier (BCC) domain, while the beta subunit then transfers the carboxyl group from carboxylated biotin to propionyl-CoA. Propionyl-CoA carboxylase also significantly acts on butyryl-CoA/butanoyl-CoA, which is converted to ethylmalonyl-CoA/(2S)-ethylmalonyl-CoA. Other alternative minor substrates include (2E)-butenoyl-CoA/crotonoyl-CoA. The sequence is that of Propionyl-CoA carboxylase beta chain, mitochondrial from Mus musculus (Mouse).